The sequence spans 443 residues: Crinkler effector protein 161 (443 aa).

A signal peptide spans 1 to 17 (MVKLSCVIVGVPGDPFQ). The interval 18 to 56 (VEIDEICELVAGLKDAIKKEKPDSIKCDADKLQLFKAAK) is LQLFLAK domain. The DWL domain stretch occupies residues 57–126 (EDRTFSASGA…GMESPSISQI (70 aa)). An HVLVXXP motif motif is present at residues 127 to 133 (HVLVVLP). Residues 134 to 439 (EDSESEGGTS…RSMPGYCCAN (306 aa)) form an effector domain region. 2 consecutive short sequence motifs (nuclear localization signal) follow at residues 161 to 170 (ADKKRKRYWH) and 384 to 393 (HQPLKRLKLS).

It belongs to the Crinkler effector family.

It is found in the secreted. Its subcellular location is the host nucleus. Functionally, secreted effector that exhibits strong cell death suppression activity and suppresses cell death induced by a variety of effectors including CRN63, Avh241 and Avr3a. Protects host plants from biotic and abiotic stresses such as salinity and drought by up-regulation of many defense-related genes, including ABC transporters, Cytochrome P450 monooxygenases and receptor-like kinases (RLKs). Also enhances resistance to Phytophtora pathogens. In Phytophthora sojae (strain P6497) (Soybean stem and root rot agent), this protein is Crinkler effector protein 161.